We begin with the raw amino-acid sequence, 1149 residues long: Potassium channel subfamily U member 1 (1149 aa).

The Extracellular portion of the chain corresponds to 1–24 (MFQTKLRNESWEDLQKMSCTTEIQ). The chain crosses the membrane as a helical span at residues 25–45 (VAFILSSFMTFISGLIILLIF). Over 46-101 (RLIWRTVKKWQIIKGTGIILELFTSGSIRRNHVRSLHFHGRFRDRIEMLLSAQTFV) the chain is Cytoplasmic. Residues 102-122 (GQVLVILVFVLSIGSLIIYFI) traverse the membrane as a helical segment. Residues 123 to 138 (NSADPVGSCSSYEDKT) are Extracellular-facing. A helical membrane pass occupies residues 139–159 (IPVDLVFNAFFSFYFGLRFMA). Residues 160-163 (ADDK) are Cytoplasmic-facing. The helical transmembrane segment at 164-184 (IKFWLEMNSIVDIFTIPPTFI) threads the bilayer. The Extracellular portion of the chain corresponds to 185–188 (SYYL). A helical; Voltage-sensor transmembrane segment spans residues 189–209 (KSNWLGLRFLRALRLLELPRI). Residues 210-226 (LQILRAIKTSNSVKFSK) are Cytoplasmic-facing. A helical membrane pass occupies residues 227–247 (LLSIVLSTWFTAAGFIHLVEN). The Extracellular portion of the chain corresponds to 248-259 (SGDPWLKGRNSQ). The segment at residues 260 to 282 (NISYFDSVYLVMATTSTVGFGDV) is an intramembrane region (pore-forming). The short motif at 276 to 279 (TVGF) is the Selectivity for potassium element. Residues 283 to 291 (VAKTSLGRT) lie on the Extracellular side of the membrane. The helical transmembrane segment at 292 to 312 (FIIFFTLGSLILFANYIPEMV) threads the bilayer. The Cytoplasmic segment spans residues 313 to 1149 (ELFANKRKYT…EDPFAYSEPL (837 aa)). 2 consecutive RCK N-terminal domains span residues 331 to 473 (KKFI…DNII) and 713 to 884 (RNHI…EGSL). Residues 829-845 (IDSSSDSSPSVSEETAS) are compositionally biased toward low complexity. Disordered regions lie at residues 829-851 (IDSS…NGHN) and 1106-1149 (ARNQ…SEPL). Residues 1106 to 1120 (ARNQIRTNSSITSQK) are compositionally biased toward polar residues.

The protein belongs to the potassium channel family. Calcium-activated (TC 1.A.1.3) subfamily. KCa5.1/KCNU1 sub-subfamily. In terms of assembly, homotetramer; which constitutes the calcium-activated potassium channel. Interacts with LRRC52; this interaction changes some channel gating properties, such as shifting gating to more negative potentials at a given pH. In terms of tissue distribution, testis-specific.

Its subcellular location is the cell membrane. It is found in the cell projection. The protein resides in the cilium. It localises to the flagellum membrane. It carries out the reaction K(+)(in) = K(+)(out). With respect to regulation, regulated by changes in cytosolic pH; activated by alkalization. VU0546110 acts as a selective inhibitor. The auxiliary subunit LRRC52 shifts the activation of KCNU1 to more negative potentials at a given pH. In terms of biological role, testis-specific potassium channel activated by both intracellular pH and membrane voltage that mediates export of K(+). Represents the primary spermatozoan K(+) current. The channel underlies a pH-triggered membrane hyperpolarization during the process of sperm capacitation, as sperm encounter the alkaline environment near the ovum in the female reproductive tract, thereby playing an essential for male fertility. This is Potassium channel subfamily U member 1 (KCNU1) from Macaca fascicularis (Crab-eating macaque).